A 316-amino-acid polypeptide reads, in one-letter code: MFFYKIIYFIGFPYIVLRLIVSIILPIASLYFIYCNFIAPKLREKPESSYKNKVVIITGASSGIGAELAKKYARLGCKVTIVARRLDQLEKVKSSFLKDYSRVNDDDILVIKGDLTLIDDCKNMVEKVIEKWSKIDICVWNAGSGSLIEFSKLQGDISIYRDNMELNYFSLVNCTHLVYKYLEQSHGSIIVISSLAGKFGTALRTSYSSSKHAVMGFFNSLRNETKNIQITIVCPGFILTEFHDNLKTLDGKQVERNKGNFMTASQCANEIILAERQGIRELIQTAKGRVGNYLQAIFPELIEFLTHKFASSSVKK.

At 1-18 the chain is on the cytoplasmic side; that stretch reads MFFYKIIYFIGFPYIVLR. The chain crosses the membrane as a helical; Signal-anchor for type II membrane protein span at residues 19–39; it reads LIVSIILPIASLYFIYCNFIA. Residues 40 to 316 are Peroxisomal-facing; sequence PKLREKPESS…HKFASSSVKK (277 aa). 56 to 80 provides a ligand contact to NAD(+); sequence IITGASSGIGAELAKKYARLGCKVT. Ser194 lines the substrate pocket. Tyr207 functions as the Proton acceptor in the catalytic mechanism.

The protein belongs to the short-chain dehydrogenases/reductases (SDR) family.

Its subcellular location is the peroxisome membrane. Putative oxidoreductase. The sequence is that of Dehydrogenase/reductase SDR family protein 7-like from Dictyostelium discoideum (Social amoeba).